The chain runs to 274 residues: Large ribosomal subunit protein uL2 (274 aa).

The tract at residues 221–254 (RGTAMNPADHPHGGGEGRTFGKHPVSPWGLPTKG) is disordered.

The protein belongs to the universal ribosomal protein uL2 family. As to quaternary structure, part of the 50S ribosomal subunit. Forms a bridge to the 30S subunit in the 70S ribosome.

Functionally, one of the primary rRNA binding proteins. Required for association of the 30S and 50S subunits to form the 70S ribosome, for tRNA binding and peptide bond formation. It has been suggested to have peptidyltransferase activity; this is somewhat controversial. Makes several contacts with the 16S rRNA in the 70S ribosome. In Sulfurihydrogenibium sp. (strain YO3AOP1), this protein is Large ribosomal subunit protein uL2.